The following is a 128-amino-acid chain: Aspartate 1-decarboxylase (128 aa).

S25 serves as the catalytic Schiff-base intermediate with substrate; via pyruvic acid. Position 25 is a pyruvic acid (Ser) (S25). A substrate-binding site is contributed by T57. Y58 acts as the Proton donor in catalysis. Substrate is bound at residue 73–75; sequence GSA.

It belongs to the PanD family. In terms of assembly, heterooctamer of four alpha and four beta subunits. Pyruvate serves as cofactor. Post-translationally, is synthesized initially as an inactive proenzyme, which is activated by self-cleavage at a specific serine bond to produce a beta-subunit with a hydroxyl group at its C-terminus and an alpha-subunit with a pyruvoyl group at its N-terminus.

It is found in the cytoplasm. It catalyses the reaction L-aspartate + H(+) = beta-alanine + CO2. Its pathway is cofactor biosynthesis; (R)-pantothenate biosynthesis; beta-alanine from L-aspartate: step 1/1. Catalyzes the pyruvoyl-dependent decarboxylation of aspartate to produce beta-alanine. This chain is Aspartate 1-decarboxylase, found in Burkholderia pseudomallei (strain 668).